The sequence spans 352 residues: C-C chemokine receptor type 5 (352 aa).

Over 1–30 the chain is Extracellular; that stretch reads MDYQVSSPTYDIDYYTSEPCQKVNVKQIAA. Residue tyrosine 3 is modified to Sulfotyrosine. O-linked (GalNAc...) serine glycosylation is found at serine 6 and serine 7. A sulfotyrosine mark is found at tyrosine 10, tyrosine 14, and tyrosine 15. Disulfide bonds link cysteine 20–cysteine 269 and cysteine 101–cysteine 178. Residues 31 to 58 traverse the membrane as a helical segment; sequence RLLPPLYSLVFIFGFVGNILVVLILINC. Residues 59–68 are Cytoplasmic-facing; the sequence is KRLKSMTDIY. Residues 69–89 traverse the membrane as a helical segment; the sequence is LLNLAISDLFFLLTVPFWAHY. Residues 90–102 are Extracellular-facing; sequence AAAQWDFGNTMCQ. Residues 103-124 form a helical membrane-spanning segment; it reads LLTGLYFIGFFSGIFFIILLTI. At 125 to 141 the chain is on the cytoplasmic side; the sequence is DRYLAIVHAVFALKART. A helical membrane pass occupies residues 142-166; the sequence is VTFGVVTSVITWVVAVFASLPGIIF. Over 167-198 the chain is Extracellular; it reads TRSQREGLHYTCSSHFPYSQYQFWKNFQTLKI. Residues 199-218 form a helical membrane-spanning segment; the sequence is VILGLVLPLLVMVICYSGIL. The Cytoplasmic segment spans residues 219-235; sequence KTLLRCRNEKKRHRAVR. The chain crosses the membrane as a helical span at residues 236–260; it reads LIFTIMIVYFLFWAPYNIVLLLNTF. Over 261–277 the chain is Extracellular; sequence QEFFGLNNCSSSNRLDQ. The chain crosses the membrane as a helical span at residues 278–301; that stretch reads AMQVTETLGMTHCCINPIIYAFVG. Topologically, residues 302–352 are cytoplasmic; that stretch reads EKFRNYLLVFFQKHIAKRFCKCCYIFQQEAPERASSVYTRSTGEQEISVGL. 3 S-palmitoyl cysteine lipidation sites follow: cysteine 321, cysteine 323, and cysteine 324. Phosphoserine; by BARK1 is present on residues serine 336, serine 337, serine 342, and serine 349.

The protein belongs to the G-protein coupled receptor 1 family. As to quaternary structure, interacts with PRAF2. Efficient ligand binding to CCL3/MIP-1alpha and CCL4/MIP-1beta requires sulfation, O-glycosylation and sialic acid modifications. Glycosylation on Ser-6 is required for efficient binding of CCL4. Interacts with GRK2. Interacts with ARRB1 and ARRB2. Interacts with CNIH4. Interacts with S100A4; this interaction stimulates T-lymphocyte chemotaxis. Sulfated on at least 2 of the N-terminal tyrosines. Sulfation is required for efficient binding of the chemokines, CCL3 and CCL4. Post-translationally, palmitoylation in the C-terminal is important for cell surface expression. In terms of processing, phosphorylation on serine residues in the C-terminal is stimulated by binding CC chemokines especially by APO-RANTES. O-glycosylated, but not N-glycosylated. Ser-6 appears to be the major site even if Ser-7 may be also O-glycosylated. Also sialylated glycans present which contribute to chemokine binding. Thr-16 and Ser-17 may also be glycosylated and, if so, with small moieties such as a T-antigen.

It localises to the cell membrane. Functionally, receptor for a number of inflammatory CC-chemokines including CCL3/MIP-1-alpha, CCL4/MIP-1-beta and RANTES and subsequently transduces a signal by increasing the intracellular calcium ion level. May play a role in the control of granulocytic lineage proliferation or differentiation. Participates in T-lymphocyte migration to the infection site by acting as a chemotactic receptor. The sequence is that of C-C chemokine receptor type 5 (CCR5) from Rhinopithecus bieti (Black snub-nosed monkey).